Reading from the N-terminus, the 177-residue chain is MLRRLVQQWSVAVFLLSYSVPSCGRSVEGPGRRLKRAVSEHQLLHDKGKSIQDLRRRFFLHHLIAEIHTAEIRATSEVSPNSKPAANTKNHAVRFGSDDEGRYLTQETNKVEPYKEQPLKTPGKKKKGKPGKRKEQEKKKRRTRSAWPLSAGAGSGLAGDHLSDISEPEPELDSRRH.

A signal peptide spans 1–24 (MLRRLVQQWSVAVFLLSYSVPSCG). A propeptide spanning residues 25-34 (RSVEGPGRRL) is cleaved from the precursor. The interval 57–68 (RFFLHHLIAEIH) is important for receptor binding. The interval 74–177 (ATSEVSPNSK…PEPELDSRRH (104 aa)) is disordered. Residues 76–90 (SEVSPNSKPAANTKN) show a composition bias toward polar residues. Positions 108-129 (TNKVEPYKEQPLKTPGKKKKGK) match the Nuclear localization signal motif. Positions 109–118 (NKVEPYKEQP) are enriched in basic and acidic residues. Residues 122-132 (PGKKKKGKPGK) show a composition bias toward basic residues.

Belongs to the parathyroid hormone family. As to quaternary structure, PTHrP interacts with PTH1R (via N-terminal extracellular domain). Post-translationally, there are several secretory forms, including osteostatin, arising from endoproteolytic cleavage of the initial translation product. Each of these secretory forms is believed to have one or more of its own receptors that mediates the normal paracrine, autocrine and endocrine actions.

The protein localises to the secreted. Its subcellular location is the cytoplasm. It is found in the nucleus. Its function is as follows. Neuroendocrine peptide which is a critical regulator of cellular and organ growth, development, migration, differentiation and survival and of epithelial calcium ion transport. Acts by binding to its receptor, PTH1R, activating G protein-coupled receptor signaling. Regulates endochondral bone development and epithelial-mesenchymal interactions during the formation of the mammary glands and teeth. Required for skeletal homeostasis. Promotes mammary mesenchyme differentiation and bud outgrowth by modulating mesenchymal cell responsiveness to BMPs. Up-regulates BMPR1A expression in the mammary mesenchyme and this increases the sensitivity of these cells to BMPs and allows them to respond to BMP4 in a paracrine and/or autocrine fashion. BMP4 signaling in the mesenchyme, in turn, triggers epithelial outgrowth and augments MSX2 expression, which causes the mammary mesenchyme to inhibit hair follicle formation within the nipple sheath. Potent inhibitor of osteoclastic bone resorption. This Oryctolagus cuniculus (Rabbit) protein is Parathyroid hormone-related protein (PTHLH).